The primary structure comprises 636 residues: Alpha-L-iduronidase (636 aa).

The signal sequence occupies residues 1–16 (MLSLLLVLTTLARIHA). Positions 39, 43, and 45 each coordinate alpha-D-mannopyranose. Alpha-L-iduronate contacts are provided by His78, Asn169, and Glu170. Glu170 serves as the catalytic Proton donor. Residue Asn180 is glycosylated (N-linked (GlcNAc...) asparagine). Lys257 lines the alpha-L-iduronate pocket. Asn268 carries an N-linked (GlcNAc...) asparagine glycan. Glu293 and Gly299 together coordinate alpha-L-iduronate. Catalysis depends on Glu293, which acts as the Nucleophile. Trp300 contacts alpha-D-mannopyranose. Asp342 and Arg356 together coordinate alpha-L-iduronate. Asn365, Asn448, Asn453, and Asn483 each carry an N-linked (GlcNAc...) asparagine glycan. A disulfide bridge connects residues Cys529 and Cys565. Asn622 carries N-linked (GlcNAc...) asparagine glycosylation.

This sequence belongs to the glycosyl hydrolase 39 family.

It is found in the lysosome. The catalysed reaction is Hydrolysis of unsulfated alpha-L-iduronosidic linkages in dermatan sulfate.. Essential lysosomal hydrolase responsible for the degradation of glycosaminoglycans (GAG) such as heparan sulfate. Required for lysosome function and autophagy. Consequently, has an essential role in the development, maintenance and function of various cells, tissues, and organs, including the muscles and the central nervous system (CNS). The polypeptide is Alpha-L-iduronidase (Drosophila melanogaster (Fruit fly)).